The sequence spans 64 residues: Large ribosomal subunit protein bL28 (64 aa).

It belongs to the bacterial ribosomal protein bL28 family.

This Syntrophobacter fumaroxidans (strain DSM 10017 / MPOB) protein is Large ribosomal subunit protein bL28.